Consider the following 350-residue polypeptide: Phenylalanine--tRNA ligase alpha subunit (350 aa).

Residue glutamate 260 coordinates Mg(2+).

This sequence belongs to the class-II aminoacyl-tRNA synthetase family. Phe-tRNA synthetase alpha subunit type 1 subfamily. In terms of assembly, tetramer of two alpha and two beta subunits. The cofactor is Mg(2+).

The protein resides in the cytoplasm. It carries out the reaction tRNA(Phe) + L-phenylalanine + ATP = L-phenylalanyl-tRNA(Phe) + AMP + diphosphate + H(+). The sequence is that of Phenylalanine--tRNA ligase alpha subunit from Mycoplasma capricolum subsp. capricolum (strain California kid / ATCC 27343 / NCTC 10154).